A 295-amino-acid chain; its full sequence is Small ribosomal subunit protein uS2 (295 aa).

It belongs to the universal ribosomal protein uS2 family. As to quaternary structure, component of the small ribosomal subunit. Mature ribosomes consist of a small (40S) and a large (60S) subunit. The 40S subunit contains about 33 different proteins and 1 molecule of RNA (18S). The 60S subunit contains about 49 different proteins and 3 molecules of RNA (25S, 5.8S and 5S). Interacts with RPS21.

It is found in the cytoplasm. Its function is as follows. Required for the assembly and/or stability of the 40S ribosomal subunit. Required for the processing of the 20S rRNA-precursor to mature 18S rRNA in a late step of the maturation of 40S ribosomal subunits. The sequence is that of Small ribosomal subunit protein uS2 from Paracoccidioides brasiliensis (strain Pb03).